A 177-amino-acid polypeptide reads, in one-letter code: Calcium-binding protein CML38 (177 aa).

Residues M1 to F11 are compositionally biased toward polar residues. The disordered stretch occupies residues M1–L44. EF-hand domains lie at D39–Q74, L75–E110, E111–S146, and R147–R177. Residues D52, N54, D56, R58, E63, D88, D90, D92, M94, and E99 each coordinate Ca(2+). Ca(2+) is bound by residues D160, N162, D164, and E171.

In terms of assembly, binds to ABCG36. Expressed in cotyledons and guard cells of young leaves. In mature root, expressed in the epidermis, trichoblasts, young lateral root and root tip. Expressed from stage 9 to 15 of flower development in anther wall.

Functionally, potential calcium sensor that binds calcium in vitro. The protein is Calcium-binding protein CML38 of Arabidopsis thaliana (Mouse-ear cress).